The sequence spans 145 residues: Aegerolysin Aa-Pri1 (145 aa).

A propeptide spanning residues methionine 1 to arginine 8 is cleaved from the precursor.

It belongs to the aegerolysin family.

This Cyclocybe aegerita (Black poplar mushroom) protein is Aegerolysin Aa-Pri1 (AA-PRI1).